Consider the following 276-residue polypeptide: Cis-2,3-dihydrobiphenyl-2,3-diol dehydrogenase (276 aa).

NAD(+) is bound at residue 9–33 (LVTGGGSGLGRAIVDRFVAEGARVA). Ser-142 contacts substrate. Tyr-155 acts as the Proton acceptor in catalysis.

Belongs to the short-chain dehydrogenases/reductases (SDR) family.

It catalyses the reaction (2R,3S)-3-phenylcyclohexa-3,5-diene-1,2-diol + NAD(+) = biphenyl-2,3-diol + NADH + H(+). Its pathway is xenobiotic degradation; biphenyl degradation; 2-hydroxy-2,4-pentadienoate and benzoate from biphenyl: step 2/4. The chain is Cis-2,3-dihydrobiphenyl-2,3-diol dehydrogenase (bphB) from Pseudomonas sp. (strain KKS102).